We begin with the raw amino-acid sequence, 365 residues long: Protein YIM1 (365 aa).

This sequence belongs to the YIM1 family.

The protein resides in the lipid droplet. It localises to the mitochondrion. The polypeptide is Protein YIM1 (YIM1) (Saccharomyces cerevisiae (strain ATCC 204508 / S288c) (Baker's yeast)).